Consider the following 212-residue polypeptide: Large ribosomal subunit protein uL3 (212 aa).

Residues 140–155 (SVSHRAIGSTGQNQSP) show a composition bias toward polar residues. The segment at 140-166 (SVSHRAIGSTGQNQSPGKVFKGKKMPG) is disordered. Glutamine 153 is modified (N5-methylglutamine).

This sequence belongs to the universal ribosomal protein uL3 family. Part of the 50S ribosomal subunit. Forms a cluster with proteins L14 and L19. Methylated by PrmB.

One of the primary rRNA binding proteins, it binds directly near the 3'-end of the 23S rRNA, where it nucleates assembly of the 50S subunit. The polypeptide is Large ribosomal subunit protein uL3 (Psychrobacter cryohalolentis (strain ATCC BAA-1226 / DSM 17306 / VKM B-2378 / K5)).